A 258-amino-acid chain; its full sequence is UPF0246 protein IL2146 (258 aa).

Belongs to the UPF0246 family.

The polypeptide is UPF0246 protein IL2146 (Idiomarina loihiensis (strain ATCC BAA-735 / DSM 15497 / L2-TR)).